A 186-amino-acid chain; its full sequence is ATP synthase subunit delta, cyanelle (186 aa).

This sequence belongs to the ATPase delta chain family. F-type ATPases have 2 components, F(1) - the catalytic core - and F(0) - the membrane proton channel. F(1) has five subunits: alpha(3), beta(3), gamma(1), delta(1), epsilon(1). CF(0) has four main subunits: a(1), b(1), b'(1) and c(10-14). The alpha and beta chains form an alternating ring which encloses part of the gamma chain. F(1) is attached to F(0) by a central stalk formed by the gamma and epsilon chains, while a peripheral stalk is formed by the delta, b and b' chains.

Its subcellular location is the plastid. It localises to the cyanelle thylakoid membrane. F(1)F(0) ATP synthase produces ATP from ADP in the presence of a proton or sodium gradient. F-type ATPases consist of two structural domains, F(1) containing the extramembraneous catalytic core and F(0) containing the membrane proton channel, linked together by a central stalk and a peripheral stalk. During catalysis, ATP synthesis in the catalytic domain of F(1) is coupled via a rotary mechanism of the central stalk subunits to proton translocation. Its function is as follows. This protein is part of the stalk that links CF(0) to CF(1). It either transmits conformational changes from CF(0) to CF(1) or is implicated in proton conduction. The chain is ATP synthase subunit delta, cyanelle from Cyanophora paradoxa.